Consider the following 492-residue polypeptide: Membrane-bound lytic murein transglycosylase F (492 aa).

The N-terminal stretch at 1-18 is a signal peptide; it reads MKGLFLRIIAIVALLLWA. The tract at residues 19-268 is non-LT domain; the sequence is IDMVFPWQQI…RIEEKYFNHL (250 aa). The tract at residues 270–492 is LT domain; sequence QFDYVDTRSY…DTLATTVTTQ (223 aa). The active site involves Glu-313.

This sequence in the N-terminal section; belongs to the bacterial solute-binding protein 3 family. The protein in the C-terminal section; belongs to the transglycosylase Slt family.

It localises to the cell outer membrane. It carries out the reaction Exolytic cleavage of the (1-&gt;4)-beta-glycosidic linkage between N-acetylmuramic acid (MurNAc) and N-acetylglucosamine (GlcNAc) residues in peptidoglycan, from either the reducing or the non-reducing ends of the peptidoglycan chains, with concomitant formation of a 1,6-anhydrobond in the MurNAc residue.. In terms of biological role, murein-degrading enzyme that degrades murein glycan strands and insoluble, high-molecular weight murein sacculi, with the concomitant formation of a 1,6-anhydromuramoyl product. Lytic transglycosylases (LTs) play an integral role in the metabolism of the peptidoglycan (PG) sacculus. Their lytic action creates space within the PG sacculus to allow for its expansion as well as for the insertion of various structures such as secretion systems and flagella. This chain is Membrane-bound lytic murein transglycosylase F, found in Pasteurella multocida (strain Pm70).